A 271-amino-acid polypeptide reads, in one-letter code: 3-methyl-2-oxobutanoate hydroxymethyltransferase (271 aa).

Mg(2+)-binding residues include Asp-53 and Asp-92. 3-methyl-2-oxobutanoate-binding positions include 53–54, Asp-92, and Lys-120; that span reads DS. Glu-122 provides a ligand contact to Mg(2+). The active-site Proton acceptor is Glu-189.

It belongs to the PanB family. Homodecamer; pentamer of dimers. The cofactor is Mg(2+).

The protein localises to the cytoplasm. It catalyses the reaction 3-methyl-2-oxobutanoate + (6R)-5,10-methylene-5,6,7,8-tetrahydrofolate + H2O = 2-dehydropantoate + (6S)-5,6,7,8-tetrahydrofolate. The protein operates within cofactor biosynthesis; (R)-pantothenate biosynthesis; (R)-pantoate from 3-methyl-2-oxobutanoate: step 1/2. Functionally, catalyzes the reversible reaction in which hydroxymethyl group from 5,10-methylenetetrahydrofolate is transferred onto alpha-ketoisovalerate to form ketopantoate. The sequence is that of 3-methyl-2-oxobutanoate hydroxymethyltransferase from Burkholderia thailandensis (strain ATCC 700388 / DSM 13276 / CCUG 48851 / CIP 106301 / E264).